The primary structure comprises 260 residues: Diphthine synthase (260 aa).

S-adenosyl-L-methionine contacts are provided by residues Leu-9, Asp-85, Ile-88, 113–114 (TA), Leu-168, Ala-208, and His-233.

The protein belongs to the diphthine synthase family. Homodimer.

The enzyme catalyses 2-[(3S)-amino-3-carboxypropyl]-L-histidyl-[translation elongation factor 2] + 3 S-adenosyl-L-methionine = diphthine-[translation elongation factor 2] + 3 S-adenosyl-L-homocysteine + 3 H(+). The protein operates within protein modification; peptidyl-diphthamide biosynthesis. S-adenosyl-L-methionine-dependent methyltransferase that catalyzes the trimethylation of the amino group of the modified target histidine residue in translation elongation factor 2 (EF-2), to form an intermediate called diphthine. The three successive methylation reactions represent the second step of diphthamide biosynthesis. The polypeptide is Diphthine synthase (Halobacterium salinarum (strain ATCC 29341 / DSM 671 / R1)).